Here is a 185-residue protein sequence, read N- to C-terminus: Ribosome-recycling factor (185 aa).

Belongs to the RRF family.

The protein resides in the cytoplasm. Its function is as follows. Responsible for the release of ribosomes from messenger RNA at the termination of protein biosynthesis. May increase the efficiency of translation by recycling ribosomes from one round of translation to another. This Wigglesworthia glossinidia brevipalpis protein is Ribosome-recycling factor.